The primary structure comprises 504 residues: UDP-N-acetylmuramoylalanine--D-glutamate ligase (504 aa).

132-138 (GTNGKTT) provides a ligand contact to ATP. Positions 286-295 (DRDASDEPAP) are enriched in basic and acidic residues. The segment at 286–305 (DRDASDEPAPKRRRKNEVAT) is disordered.

Belongs to the MurCDEF family.

It localises to the cytoplasm. The catalysed reaction is UDP-N-acetyl-alpha-D-muramoyl-L-alanine + D-glutamate + ATP = UDP-N-acetyl-alpha-D-muramoyl-L-alanyl-D-glutamate + ADP + phosphate + H(+). It functions in the pathway cell wall biogenesis; peptidoglycan biosynthesis. Functionally, cell wall formation. Catalyzes the addition of glutamate to the nucleotide precursor UDP-N-acetylmuramoyl-L-alanine (UMA). The chain is UDP-N-acetylmuramoylalanine--D-glutamate ligase from Paraburkholderia xenovorans (strain LB400).